The sequence spans 380 residues: Cytochrome b (380 aa).

Transmembrane regions (helical) follow at residues 34 to 54 (FGSLLGLCLITQILTGLFLAM), 78 to 99 (WLLRNVHANGASLFFICMYCHI), 114 to 134 (WNVGVILFLVTVLTAFVGYVL), and 179 to 199 (FFAFHFLFPFIIAALAIIDLV). His84 and His98 together coordinate heme b. His183 serves as a coordination point for heme b. His202 provides a ligand contact to a ubiquinone. 4 consecutive transmembrane segments (helical) span residues 227 to 247 (TKDTVGFIALIAALFVLALLF), 289 to 309 (LGGVIALVAAILVLFLMPLLN), 321 to 341 (LSQATFWILVATFFVLTWIGS), and 348 to 369 (FVLIGQIASLLYFSLFIFGFPL).

This sequence belongs to the cytochrome b family. In terms of assembly, the main subunits of complex b-c1 are: cytochrome b, cytochrome c1 and the Rieske protein. The cofactor is heme b.

It localises to the mitochondrion inner membrane. Its function is as follows. Component of the ubiquinol-cytochrome c reductase complex (complex III or cytochrome b-c1 complex) that is part of the mitochondrial respiratory chain. The b-c1 complex mediates electron transfer from ubiquinol to cytochrome c. Contributes to the generation of a proton gradient across the mitochondrial membrane that is then used for ATP synthesis. The polypeptide is Cytochrome b (MT-CYB) (Paracentrotus lividus (Common sea urchin)).